A 200-amino-acid polypeptide reads, in one-letter code: Small ribosomal subunit protein uS4 (200 aa).

The S4 RNA-binding domain occupies 91 to 150 (TRLDNVVYRLGITPTRRSARQLVSHKHITVNGKIVNIPSYALKVGDIIGLTEKTKSSNAI).

It belongs to the universal ribosomal protein uS4 family. In terms of assembly, part of the 30S ribosomal subunit. Contacts protein S5. The interaction surface between S4 and S5 is involved in control of translational fidelity.

In terms of biological role, one of the primary rRNA binding proteins, it binds directly to 16S rRNA where it nucleates assembly of the body of the 30S subunit. With S5 and S12 plays an important role in translational accuracy. The protein is Small ribosomal subunit protein uS4 of Amoebophilus asiaticus (strain 5a2).